Consider the following 181-residue polypeptide: ATP synthase subunit delta (181 aa).

It belongs to the ATPase delta chain family. F-type ATPases have 2 components, F(1) - the catalytic core - and F(0) - the membrane proton channel. F(1) has five subunits: alpha(3), beta(3), gamma(1), delta(1), epsilon(1). F(0) has three main subunits: a(1), b(2) and c(10-14). The alpha and beta chains form an alternating ring which encloses part of the gamma chain. F(1) is attached to F(0) by a central stalk formed by the gamma and epsilon chains, while a peripheral stalk is formed by the delta and b chains.

The protein localises to the cell membrane. F(1)F(0) ATP synthase produces ATP from ADP in the presence of a proton or sodium gradient. F-type ATPases consist of two structural domains, F(1) containing the extramembraneous catalytic core and F(0) containing the membrane proton channel, linked together by a central stalk and a peripheral stalk. During catalysis, ATP synthesis in the catalytic domain of F(1) is coupled via a rotary mechanism of the central stalk subunits to proton translocation. In terms of biological role, this protein is part of the stalk that links CF(0) to CF(1). It either transmits conformational changes from CF(0) to CF(1) or is implicated in proton conduction. This is ATP synthase subunit delta from Oceanobacillus iheyensis (strain DSM 14371 / CIP 107618 / JCM 11309 / KCTC 3954 / HTE831).